The chain runs to 205 residues: Outer-membrane lipoprotein LolB (205 aa).

A signal peptide spans 1 to 17; that stretch reads MFLRHVIVFSLIALLTG. A lipid anchor (N-palmitoyl cysteine) is attached at cysteine 18. A lipid anchor (S-diacylglycerol cysteine) is attached at cysteine 18.

It belongs to the LolB family. As to quaternary structure, monomer.

The protein resides in the cell outer membrane. Plays a critical role in the incorporation of lipoproteins in the outer membrane after they are released by the LolA protein. The chain is Outer-membrane lipoprotein LolB from Pseudomonas savastanoi pv. phaseolicola (strain 1448A / Race 6) (Pseudomonas syringae pv. phaseolicola (strain 1448A / Race 6)).